The sequence spans 246 residues: tRNA pseudouridine synthase A (246 aa).

Residue Asp-52 is the Nucleophile of the active site. Tyr-111 lines the substrate pocket.

The protein belongs to the tRNA pseudouridine synthase TruA family. Homodimer.

The catalysed reaction is uridine(38/39/40) in tRNA = pseudouridine(38/39/40) in tRNA. In terms of biological role, formation of pseudouridine at positions 38, 39 and 40 in the anticodon stem and loop of transfer RNAs. In Borrelia garinii subsp. bavariensis (strain ATCC BAA-2496 / DSM 23469 / PBi) (Borreliella bavariensis), this protein is tRNA pseudouridine synthase A.